The primary structure comprises 54 residues: Metallothionein-4 (54 aa).

It belongs to the metallothionein superfamily. Type 11 family.

The polypeptide is Metallothionein-4 (MTP4) (Yarrowia lipolytica (strain CLIB 122 / E 150) (Yeast)).